The primary structure comprises 235 residues: Voltage-gated hydrogen channel 1 (235 aa).

The Cytoplasmic portion of the chain corresponds to Met1–Arg62. The chain crosses the membrane as a helical span at residues Phe63–Leu83. Over Met84–Val100 the chain is Extracellular. Residues Phe101 to Tyr123 form a helical membrane-spanning segment. Over Gly124–Lys131 the chain is Cytoplasmic. Residues Phe132–Phe152 form a helical membrane-spanning segment. Topologically, residues Arg153–Ala159 are extracellular. Residues Val160 to Leu180 form a helical membrane-spanning segment. Residues Ser181–Thr235 lie on the Cytoplasmic side of the membrane. Positions Glu187–His228 form a coiled coil.

This sequence belongs to the hydrogen channel family. Homodimer.

It is found in the membrane. Its subcellular location is the cell membrane. Functionally, mediates the voltage-dependent proton permeability of excitable membranes. Forms a proton-selective channel through which protons may pass in accordance with their electrochemical gradient. This Gallus gallus (Chicken) protein is Voltage-gated hydrogen channel 1 (HVCN1).